We begin with the raw amino-acid sequence, 857 residues long: Aminopeptidase N (857 aa).

Substrate contacts are provided by residues Glu-130 and 264 to 268 (GAMEN). His-298 contacts Zn(2+). Glu-299 functions as the Proton acceptor in the catalytic mechanism. Zn(2+) contacts are provided by His-302 and Glu-321.

It belongs to the peptidase M1 family. As to quaternary structure, monomer. The cofactor is Zn(2+). Post-translationally, the N-terminus is blocked.

The protein localises to the cytoplasm. The enzyme catalyses Release of an N-terminal amino acid, Xaa-|-Yaa- from a peptide, amide or arylamide. Xaa is preferably Ala, but may be most amino acids including Pro (slow action). When a terminal hydrophobic residue is followed by a prolyl residue, the two may be released as an intact Xaa-Pro dipeptide.. Its function is as follows. Aminopeptidase with broad substrate specificity to several peptides. Shows strong preference for leucine but also cleaves next to Arg and Lys in peptide-bond-containing substrates. The protein is Aminopeptidase N (pepN) of Streptomyces lividans.